The primary structure comprises 366 residues: Ribosomal RNA large subunit methyltransferase M (366 aa).

Residues serine 188, 221–224 (CPGG), aspartate 240, aspartate 260, and aspartate 277 contribute to the S-adenosyl-L-methionine site. Catalysis depends on lysine 306, which acts as the Proton acceptor.

It belongs to the class I-like SAM-binding methyltransferase superfamily. RNA methyltransferase RlmE family. RlmM subfamily. As to quaternary structure, monomer.

The protein localises to the cytoplasm. It catalyses the reaction cytidine(2498) in 23S rRNA + S-adenosyl-L-methionine = 2'-O-methylcytidine(2498) in 23S rRNA + S-adenosyl-L-homocysteine + H(+). In terms of biological role, catalyzes the 2'-O-methylation at nucleotide C2498 in 23S rRNA. The protein is Ribosomal RNA large subunit methyltransferase M of Escherichia coli O127:H6 (strain E2348/69 / EPEC).